The sequence spans 934 residues: Translation initiation factor IF-2 (934 aa).

The segment at 54-323 is disordered; the sequence is AQESKPTTPP…KRQKRNEYEA (270 aa). Low complexity-rich tracts occupy residues 80–154, 185–197, 206–231, and 238–250; these read PKPG…AGKP, RGGA…PRPG, GQAP…PGAA, and RPSP…TPSP. Gly residues predominate over residues 260–303; the sequence is GFGGGRGRGGRPGGPGGPGGPGGPGPRGGRGGRRGGTAGAFGRP. Over residues 308 to 317 the composition is skewed to basic residues; that stretch reads RRGRKSKRQK. A tr-type G domain is found at 430–602; that stretch reads QRPPVVTVMG…VLLTADASLD (173 aa). The tract at residues 439 to 446 is G1; it reads GHVDHGKT. A GTP-binding site is contributed by 439 to 446; the sequence is GHVDHGKT. A G2 region spans residues 464 to 468; that stretch reads GITQH. Residues 489-492 are G3; that stretch reads DTPG. GTP-binding positions include 489-493 and 543-546; these read DTPGH and NKID. The interval 543–546 is G4; it reads NKID. The tract at residues 579–581 is G5; it reads SAK.

It belongs to the TRAFAC class translation factor GTPase superfamily. Classic translation factor GTPase family. IF-2 subfamily.

It localises to the cytoplasm. Its function is as follows. One of the essential components for the initiation of protein synthesis. Protects formylmethionyl-tRNA from spontaneous hydrolysis and promotes its binding to the 30S ribosomal subunits. Also involved in the hydrolysis of GTP during the formation of the 70S ribosomal complex. This chain is Translation initiation factor IF-2, found in Corynebacterium urealyticum (strain ATCC 43042 / DSM 7109).